Consider the following 486-residue polypeptide: MKFPFPTLMVQGTTSDAGKTTLVAALCRLLAQQGVRVVPFKPQNMALNSAVTADGGEIGRAQALQAVAAGLPPHTDMNPILLKPSSDTGAQVIIHGRARNDMNARDYHAYKPIAMQAVLESYGRLSAQYETVLVEGAGSPAEVNLRDRDIANMGFAEAVDCPVILVADIDRGGVFAHIIGTLACLSESERKRTIGFVINRFRGDISLLEPGLRWLEEQTGKPVLAVLPYLHGLFLDAEDAVEQTQTARGAFRIVVPVPPRISNHTDFDALRAHPDVDLQLIGPGQPIPAADLIILPGSKNTRGDLDWLIANGWREALIRHARYGGKIIGICGGYQMLGKTIADPQGVEGLPGISQGLALLDITTVLTPEKQLEQVHGMCAFADTDAAVSGYEIHMGLSEGEACSHPAFVIAGRPEGARSADDQILGSYLHGMFDTPSACSALLRWAGLDSDVAVDTARLREASLDRIAQAAQPLLDALCALDPPTA.

One can recognise a GATase cobBQ-type domain in the interval 250 to 438 (AFRIVVPVPP…LHGMFDTPSA (189 aa)). Cys-331 functions as the Nucleophile in the catalytic mechanism. The active site involves His-430.

Belongs to the CobB/CobQ family. CobQ subfamily.

It participates in cofactor biosynthesis; adenosylcobalamin biosynthesis. Functionally, catalyzes amidations at positions B, D, E, and G on adenosylcobyrinic A,C-diamide. NH(2) groups are provided by glutamine, and one molecule of ATP is hydrogenolyzed for each amidation. This is Cobyric acid synthase from Herminiimonas arsenicoxydans.